Here is a 108-residue protein sequence, read N- to C-terminus: UPF0060 membrane protein YnfA (108 aa).

The Periplasmic segment spans residues 1 to 5; it reads MLKTT. The chain crosses the membrane as a helical span at residues 6 to 26; that stretch reads LLFFVTALCEIIGCFLPWLWL. Over 27–30 the chain is Cytoplasmic; the sequence is KRGA. The helical transmembrane segment at 31-51 threads the bilayer; it reads SVWWLLPAAASLALFVWLLTL. At 52-60 the chain is on the periplasmic side; that stretch reads HPAASGRVY. The helical transmembrane segment at 61 to 81 threads the bilayer; that stretch reads AAYGGVYVCTALLWLRVVDGV. Over 82–84 the chain is Cytoplasmic; it reads RLT. A helical transmembrane segment spans residues 85–105; sequence VYDWCGALIALCGMLIIVVGW. Topologically, residues 106-108 are periplasmic; it reads GRT.

The protein belongs to the UPF0060 family.

The protein localises to the cell inner membrane. The polypeptide is UPF0060 membrane protein YnfA (Salmonella agona (strain SL483)).